A 68-amino-acid chain; its full sequence is Phylloseptin-SP1 (68 aa).

The first 22 residues, 1–22 (MAFLKKSLFLVLFLGLVSLSIC), serve as a signal peptide directing secretion. A propeptide spanning residues 23–45 (EEKERETKEEENEQEDDNREEKR) is cleaved from the precursor. Leucine 67 is subject to Leucine amide.

In terms of tissue distribution, expressed by the skin glands.

It is found in the secreted. In terms of biological role, weak cationic amphipathic alpha-helical antimicrobial peptide with weak activity against Gram-positive and Gram-negative bacteria and fungi. Has been tested against E.coli (MIC&gt;217.69 uM), S.aureus (MIC&gt;217.69 uM), K.pneumoniae (MIC&gt;189.00 uM) and C.albicans (MIC&gt;217.69 uM). Shows a moderate hemolytic activity. This Agalychnis spurrelli (Gliding leaf frog) protein is Phylloseptin-SP1.